A 263-amino-acid polypeptide reads, in one-letter code: Endonuclease 8 (263 aa).

Catalysis depends on Pro2, which acts as the Schiff-base intermediate with DNA. The Proton donor role is filled by Glu3. The active-site Proton donor; for beta-elimination activity is the Lys53. Positions 70, 125, and 169 each coordinate DNA. An FPG-type zinc finger spans residues 229–263 (KVFHRDGERCERCGGVIEKTTLSSRPFYWCPGCQH). The Proton donor; for delta-elimination activity role is filled by Arg253.

It belongs to the FPG family. Zn(2+) is required as a cofactor.

It carries out the reaction 2'-deoxyribonucleotide-(2'-deoxyribose 5'-phosphate)-2'-deoxyribonucleotide-DNA = a 3'-end 2'-deoxyribonucleotide-(2,3-dehydro-2,3-deoxyribose 5'-phosphate)-DNA + a 5'-end 5'-phospho-2'-deoxyribonucleoside-DNA + H(+). In terms of biological role, involved in base excision repair of DNA damaged by oxidation or by mutagenic agents. Acts as a DNA glycosylase that recognizes and removes damaged bases. Has a preference for oxidized pyrimidines, such as thymine glycol, 5,6-dihydrouracil and 5,6-dihydrothymine. Has AP (apurinic/apyrimidinic) lyase activity and introduces nicks in the DNA strand. Cleaves the DNA backbone by beta-delta elimination to generate a single-strand break at the site of the removed base with both 3'- and 5'-phosphates. In Klebsiella pneumoniae (strain 342), this protein is Endonuclease 8.